Here is a 266-residue protein sequence, read N- to C-terminus: Thymidylate synthase (266 aa).

Position 24 (R24) interacts with dUMP. Position 54 (H54) interacts with (6R)-5,10-methylene-5,6,7,8-tetrahydrofolate. 129 to 130 (RR) is a binding site for dUMP. C149 serves as the catalytic Nucleophile. Residues 169-172 (RSAD), N180, and 210-212 (HIY) each bind dUMP. D172 contacts (6R)-5,10-methylene-5,6,7,8-tetrahydrofolate. A265 is a (6R)-5,10-methylene-5,6,7,8-tetrahydrofolate binding site.

This sequence belongs to the thymidylate synthase family. Bacterial-type ThyA subfamily. In terms of assembly, homodimer.

Its subcellular location is the cytoplasm. It catalyses the reaction dUMP + (6R)-5,10-methylene-5,6,7,8-tetrahydrofolate = 7,8-dihydrofolate + dTMP. It participates in pyrimidine metabolism; dTTP biosynthesis. Its function is as follows. Catalyzes the reductive methylation of 2'-deoxyuridine-5'-monophosphate (dUMP) to 2'-deoxythymidine-5'-monophosphate (dTMP) while utilizing 5,10-methylenetetrahydrofolate (mTHF) as the methyl donor and reductant in the reaction, yielding dihydrofolate (DHF) as a by-product. This enzymatic reaction provides an intracellular de novo source of dTMP, an essential precursor for DNA biosynthesis. The chain is Thymidylate synthase from Mycobacterium sp. (strain KMS).